The primary structure comprises 508 residues: tRNA-2-methylthio-N(6)-dimethylallyladenosine synthase (508 aa).

Positions 13–131 constitute an MTTase N-terminal domain; sequence KTYEVRTYGC…LPVLLERARV (119 aa). 6 residues coordinate [4Fe-4S] cluster: C22, C60, C94, C168, C172, and C175. A Radical SAM core domain is found at 154–385; sequence RESAYAAWVS…ALQEEISWDE (232 aa). The TRAM domain occupies 387-455; the sequence is KKQVGRTLEL…PHHLLAEGPV (69 aa).

It belongs to the methylthiotransferase family. MiaB subfamily. Monomer. The cofactor is [4Fe-4S] cluster.

The protein localises to the cytoplasm. The enzyme catalyses N(6)-dimethylallyladenosine(37) in tRNA + (sulfur carrier)-SH + AH2 + 2 S-adenosyl-L-methionine = 2-methylsulfanyl-N(6)-dimethylallyladenosine(37) in tRNA + (sulfur carrier)-H + 5'-deoxyadenosine + L-methionine + A + S-adenosyl-L-homocysteine + 2 H(+). Its function is as follows. Catalyzes the methylthiolation of N6-(dimethylallyl)adenosine (i(6)A), leading to the formation of 2-methylthio-N6-(dimethylallyl)adenosine (ms(2)i(6)A) at position 37 in tRNAs that read codons beginning with uridine. This Streptomyces avermitilis (strain ATCC 31267 / DSM 46492 / JCM 5070 / NBRC 14893 / NCIMB 12804 / NRRL 8165 / MA-4680) protein is tRNA-2-methylthio-N(6)-dimethylallyladenosine synthase.